The following is a 154-amino-acid chain: Small ribosomal subunit protein bS6 (154 aa).

Residues 97-154 (DSEPSAMMQKRDRDDRKDRERGRRRDDEGFGGGGGFGGDRGDRGDRGDRGERSFGGEG) form a disordered region. 2 stretches are compositionally biased toward basic and acidic residues: residues 105-124 (QKRDRDDRKDRERGRRRDDE) and 135-154 (DRGDRGDRGDRGERSFGGEG).

This sequence belongs to the bacterial ribosomal protein bS6 family.

Functionally, binds together with bS18 to 16S ribosomal RNA. This is Small ribosomal subunit protein bS6 from Methylobacterium radiotolerans (strain ATCC 27329 / DSM 1819 / JCM 2831 / NBRC 15690 / NCIMB 10815 / 0-1).